A 450-amino-acid chain; its full sequence is Probable helicase D10 (450 aa).

In terms of domain architecture, Helicase ATP-binding spans 95 to 240; sequence PIYEECDDTC…MFKDFFGYKI (146 aa). 108–115 contributes to the ATP binding site; the sequence is GKPGFGKT. Positions 193-196 match the DEAH box motif; it reads DEVH. Residues 289-439 enclose the Helicase C-terminal domain; sequence NLAHLYVNMG…TITMTPEKAV (151 aa).

The enzyme catalyses ATP + H2O = ADP + phosphate + H(+). This chain is Probable helicase D10 (D10), found in Escherichia phage T5 (Enterobacteria phage T5).